The following is a 438-amino-acid chain: Acid phosphatase type 7 (438 aa).

The N-terminal stretch at 1 to 23 (MSPFLGGWLFFCMLLPFSPGVQG) is a signal peptide. Residues Asp141, Asp170, and Tyr173 each contribute to the Fe cation site. Asp170 contacts Zn(2+). Residue Asn205 participates in Zn(2+) binding. A glycan (N-linked (GlcNAc...) asparagine) is linked at Asn211. Zn(2+)-binding residues include His286 and His333. Fe cation is bound at residue His335. Residues Asn350 and Asn404 are each glycosylated (N-linked (GlcNAc...) asparagine).

The protein belongs to the metallophosphoesterase superfamily. Purple acid phosphatase family. Requires Fe cation as cofactor. Zn(2+) serves as cofactor.

The protein localises to the secreted. The catalysed reaction is a phosphate monoester + H2O = an alcohol + phosphate. The protein is Acid phosphatase type 7 of Mus musculus (Mouse).